We begin with the raw amino-acid sequence, 479 residues long: Adenylate kinase 8 (479 aa).

Adenylate kinase stretches follow at residues 58 to 258 and 269 to 471; these read PRVV…TYVQ and PKVL…SGII. Residue 67–72 participates in ATP binding; it reads ASGKTT. Positions 87–113 are NMP 1; that stretch reads TKENLLEREFSLLSLEAKKHYQVYKRV. AMP-binding positions include 140 to 143, Gln147, and Arg203; that span reads GIPE. Residues 177-206 form an LID 1 region; that stretch reads GKRIDPVTGEIYHTTFDWPPELEIQNRLIQ. ATP is bound at residue 278–283; sequence GCGKKL. The interval 298 to 327 is NMP 2; it reads SCGQLLKEAMAAESSLGDLIEPFFEKRMTV. Residues 325-327, 354-357, and Gln361 contribute to the AMP site; these read MTV and GFPR. Residues 391–424 form an LID 2 region; it reads LRRTDPVTGERFHLMYKPPPTIEVQARLLQNPKD. Arg392 is a binding site for ATP.

Belongs to the adenylate kinase family. In terms of assembly, interacts with CFAP45 and CFAP52; CFAP45 and AK8 dimerization may create a cavity at the interface of the dimer that can accommodate AMP.

The protein resides in the cytoplasm. It is found in the cytosol. The protein localises to the cytoskeleton. Its subcellular location is the cilium axoneme. It catalyses the reaction AMP + ATP = 2 ADP. It carries out the reaction a 2'-deoxyribonucleoside 5'-diphosphate + ATP = a 2'-deoxyribonucleoside 5'-triphosphate + ADP. The enzyme catalyses a ribonucleoside 5'-diphosphate + ATP = a ribonucleoside 5'-triphosphate + ADP. In terms of biological role, nucleoside monophosphate (NMP) kinase that catalyzes the reversible transfer of the terminal phosphate group between nucleoside triphosphates and monophosphates. Has highest activity toward AMP, and weaker activity toward dAMP, CMP and dCMP. Also displays broad nucleoside diphosphate kinase activity. The protein is Adenylate kinase 8 (Ak8) of Rattus norvegicus (Rat).